The following is a 175-amino-acid chain: NADH-quinone oxidoreductase subunit I 2 (175 aa).

2 4Fe-4S ferredoxin-type domains span residues 50–82 and 98–127; these read HVLQRDENGLEKCVACFLCAAACPSNCIYIEAA and KVYNIDYNRCIFCGYCVEACPTDAITHGHG. Cysteine 62, cysteine 65, cysteine 68, cysteine 72, cysteine 107, cysteine 110, cysteine 113, and cysteine 117 together coordinate [4Fe-4S] cluster.

Belongs to the complex I 23 kDa subunit family. In terms of assembly, NDH-1 is composed of 14 different subunits. Subunits NuoA, H, J, K, L, M, N constitute the membrane sector of the complex. The cofactor is [4Fe-4S] cluster.

The protein localises to the cell inner membrane. The enzyme catalyses a quinone + NADH + 5 H(+)(in) = a quinol + NAD(+) + 4 H(+)(out). In terms of biological role, NDH-1 shuttles electrons from NADH, via FMN and iron-sulfur (Fe-S) centers, to quinones in the respiratory chain. The immediate electron acceptor for the enzyme in this species is believed to be ubiquinone. Couples the redox reaction to proton translocation (for every two electrons transferred, four hydrogen ions are translocated across the cytoplasmic membrane), and thus conserves the redox energy in a proton gradient. The protein is NADH-quinone oxidoreductase subunit I 2 of Koribacter versatilis (strain Ellin345).